Reading from the N-terminus, the 282-residue chain is Stage 0 sporulation protein J (282 aa).

A DNA-binding region (H-T-H motif) is located at residues 139-158 (EQLAKRLGKSRPHIANHLRL).

Belongs to the ParB family.

It localises to the cytoplasm. The protein resides in the nucleoid. Required for the initiation of sporulation and for normal chromosome segregation. Antagonizes sporulation inhibition by Soj. It probably interacts with a specific DNA site and other proteins involved in partitioning and cell division, and antagonizes Soj in response to cell cycle events related to chromosome partitioning. The protein is Stage 0 sporulation protein J of Bacillus subtilis (strain 168).